We begin with the raw amino-acid sequence, 297 residues long: Vacuolar protein sorting-associated protein 26 (297 aa).

It belongs to the VPS26 family. In terms of assembly, component of the retromer complex, composed of VPS26, VPS29 and VPS35. As part of the retromer complex, interacts with the sorting receptor SORTLR/sortilin. Interacts with GTPase RAB7.

In terms of biological role, plays a role in vesicular protein sorting. Component of the membrane-associated retromer complex which is essential in endosome-to-Golgi retrograde transport. The protein is Vacuolar protein sorting-associated protein 26 of Plasmodium falciparum (isolate 3D7).